A 452-amino-acid chain; its full sequence is MADNTPTTANDLLNDATQAAAKSPEEIAKENDLLPKLITHLDRHLIFPLLQFVGDQDDEPSPEITKAKFELLKKTNMTDYVASLHCEIEGVDEAPKEYANKRQEILQRLEIFGQESEKITDLLGREDVVTGLRSDKVANLEFLKKEHDVTIEMVNVLYDFGNFQYSCGNYGAAAELLYQFRVLSTDDDKVTAATWGKLACEILTGNWESAMEEVQKVKESIETKLFNKPLAQLHHRTWLIHWALFPFFNHEPARDVICDLFFSPAFINTIQTACPWILRYLTAAVITNRNRTRNTGQYQKQLKDIIRIVKQENYEYSDPVTDFIKALYLDFDFEEAQKKLSEAEEVLRSDFFLVAASENFVEAARHLISESYCKIHQRIDIKDLSARLGLNQDDGEKWIVNLIRDTRVDAKIDYKEGTVVMNHPPSSVYQQVIERTKGGFFRTQVLSAAVAK.

Over residues 1–17 (MADNTPTTANDLLNDAT) the composition is skewed to polar residues. The interval 1–23 (MADNTPTTANDLLNDATQAAAKS) is disordered. In terms of domain architecture, PCI spans 246 to 426 (PFFNHEPARD…GTVVMNHPPS (181 aa)).

The protein belongs to the eIF-3 subunit E family. In terms of assembly, component of the eukaryotic translation initiation factor 3 (eIF-3) complex.

It localises to the cytoplasm. Its function is as follows. Component of the eukaryotic translation initiation factor 3 (eIF-3) complex, which is involved in protein synthesis of a specialized repertoire of mRNAs and, together with other initiation factors, stimulates binding of mRNA and methionyl-tRNAi to the 40S ribosome. The eIF-3 complex specifically targets and initiates translation of a subset of mRNAs involved in cell proliferation. The chain is Eukaryotic translation initiation factor 3 subunit E (int6) from Botryotinia fuckeliana (strain B05.10) (Noble rot fungus).